The sequence spans 186 residues: Threonylcarbamoyl-AMP synthase (186 aa).

The 182-residue stretch at 5-186 folds into the YrdC-like domain; sequence TQSINDAVKC…DAITGEILRL (182 aa).

It belongs to the SUA5 family. TsaC subfamily.

Its subcellular location is the cytoplasm. It catalyses the reaction L-threonine + hydrogencarbonate + ATP = L-threonylcarbamoyladenylate + diphosphate + H2O. In terms of biological role, required for the formation of a threonylcarbamoyl group on adenosine at position 37 (t(6)A37) in tRNAs that read codons beginning with adenine. Catalyzes the conversion of L-threonine, HCO(3)(-)/CO(2) and ATP to give threonylcarbamoyl-AMP (TC-AMP) as the acyladenylate intermediate, with the release of diphosphate. The sequence is that of Threonylcarbamoyl-AMP synthase from Coxiella burnetii (strain RSA 331 / Henzerling II).